The chain runs to 482 residues: 2-succinylbenzoate--CoA ligase (482 aa).

Belongs to the ATP-dependent AMP-binding enzyme family. MenE subfamily.

The catalysed reaction is 2-succinylbenzoate + ATP + CoA = 2-succinylbenzoyl-CoA + AMP + diphosphate. It functions in the pathway quinol/quinone metabolism; 1,4-dihydroxy-2-naphthoate biosynthesis; 1,4-dihydroxy-2-naphthoate from chorismate: step 5/7. Its pathway is quinol/quinone metabolism; menaquinone biosynthesis. Functionally, converts 2-succinylbenzoate (OSB) to 2-succinylbenzoyl-CoA (OSB-CoA). The polypeptide is 2-succinylbenzoate--CoA ligase (Bacillus cereus (strain ATCC 14579 / DSM 31 / CCUG 7414 / JCM 2152 / NBRC 15305 / NCIMB 9373 / NCTC 2599 / NRRL B-3711)).